Here is a 200-residue protein sequence, read N- to C-terminus: NADH-ubiquinone oxidoreductase 21.3 kDa subunit (200 aa).

3 helical membrane passes run 16 to 36, 48 to 68, and 105 to 125; these read IKSG…MASL, MHVF…GGIY, and FPVI…FAFS.

Complex I is composed of about 40 different subunits.

The protein localises to the mitochondrion inner membrane. The catalysed reaction is a ubiquinone + NADH + 5 H(+)(in) = a ubiquinol + NAD(+) + 4 H(+)(out). Its function is as follows. Transfer of electrons from NADH to the respiratory chain. The immediate electron acceptor for the enzyme is believed to be ubiquinone. This Neurospora crassa (strain ATCC 24698 / 74-OR23-1A / CBS 708.71 / DSM 1257 / FGSC 987) protein is NADH-ubiquinone oxidoreductase 21.3 kDa subunit.